Consider the following 244-residue polypeptide: tRNA1(Val) (adenine(37)-N6)-methyltransferase (244 aa).

The protein belongs to the methyltransferase superfamily. tRNA (adenine-N(6)-)-methyltransferase family.

It is found in the cytoplasm. The enzyme catalyses adenosine(37) in tRNA1(Val) + S-adenosyl-L-methionine = N(6)-methyladenosine(37) in tRNA1(Val) + S-adenosyl-L-homocysteine + H(+). Its function is as follows. Specifically methylates the adenine in position 37 of tRNA(1)(Val) (anticodon cmo5UAC). The polypeptide is tRNA1(Val) (adenine(37)-N6)-methyltransferase (Shewanella sediminis (strain HAW-EB3)).